Here is a 135-residue protein sequence, read N- to C-terminus: ATP synthase epsilon chain (135 aa).

It belongs to the ATPase epsilon chain family. In terms of assembly, F-type ATPases have 2 components, CF(1) - the catalytic core - and CF(0) - the membrane proton channel. CF(1) has five subunits: alpha(3), beta(3), gamma(1), delta(1), epsilon(1). CF(0) has three main subunits: a, b and c.

It is found in the cellular thylakoid membrane. Its function is as follows. Produces ATP from ADP in the presence of a proton gradient across the membrane. The chain is ATP synthase epsilon chain from Prochlorococcus marinus (strain NATL1A).